Reading from the N-terminus, the 336-residue chain is Glyceraldehyde-3-phosphate dehydrogenase 1 (336 aa).

Residues 13–14 and Asp35 contribute to the NAD(+) site; that span reads RI. Ser59 carries the phosphoserine modification. Arg80 is a binding site for NAD(+). Residue Ser125 is modified to Phosphoserine. D-glyceraldehyde 3-phosphate is bound by residues 151–153, Thr182, 211–212, and Arg234; these read SCT and TG. The active-site Nucleophile is Cys152. Residue Asn316 participates in NAD(+) binding.

The protein belongs to the glyceraldehyde-3-phosphate dehydrogenase family. As to quaternary structure, homotetramer.

It is found in the cytoplasm. The catalysed reaction is D-glyceraldehyde 3-phosphate + phosphate + NAD(+) = (2R)-3-phospho-glyceroyl phosphate + NADH + H(+). It functions in the pathway carbohydrate degradation; glycolysis; pyruvate from D-glyceraldehyde 3-phosphate: step 1/5. The chain is Glyceraldehyde-3-phosphate dehydrogenase 1 (tdh1) from Schizosaccharomyces pombe (strain 972 / ATCC 24843) (Fission yeast).